We begin with the raw amino-acid sequence, 75 residues long: RNA-binding protein KhpA (75 aa).

Residues 29-75 enclose the KH domain; that stretch reads SIILELKVAPEDMGKVIGKQGRIAKAIRTVIKAAAVKENKRVVVEII.

Belongs to the KhpA RNA-binding protein family. As to quaternary structure, forms a complex with KhpB.

Its subcellular location is the cytoplasm. In terms of biological role, a probable RNA chaperone. Forms a complex with KhpB which binds to cellular RNA and controls its expression. Plays a role in peptidoglycan (PG) homeostasis and cell length regulation. The chain is RNA-binding protein KhpA from Clostridium acetobutylicum (strain ATCC 824 / DSM 792 / JCM 1419 / IAM 19013 / LMG 5710 / NBRC 13948 / NRRL B-527 / VKM B-1787 / 2291 / W).